We begin with the raw amino-acid sequence, 99 residues long: Sec-independent protein translocase protein TatA (99 aa).

The chain crosses the membrane as a helical span at residues 1-21 (MIGNLKPLEIVLIIAVILLLF). A disordered region spans residues 46–99 (AMKKDDAATAAPTTETVADDTVPPQSTTARTIQAAPGDVTSSRPVSEAKPTTQS). Low complexity predominate over residues 53 to 69 (ATAAPTTETVADDTVPP). A compositionally biased stretch (polar residues) spans 84-99 (VTSSRPVSEAKPTTQS).

It belongs to the TatA/E family. As to quaternary structure, the Tat system comprises two distinct complexes: a TatABC complex, containing multiple copies of TatA, TatB and TatC subunits, and a separate TatA complex, containing only TatA subunits. Substrates initially bind to the TatABC complex, which probably triggers association of the separate TatA complex to form the active translocon.

It is found in the cell membrane. Its function is as follows. Part of the twin-arginine translocation (Tat) system that transports large folded proteins containing a characteristic twin-arginine motif in their signal peptide across membranes. TatA could form the protein-conducting channel of the Tat system. This is Sec-independent protein translocase protein TatA from Streptomyces griseus subsp. griseus (strain JCM 4626 / CBS 651.72 / NBRC 13350 / KCC S-0626 / ISP 5235).